The chain runs to 218 residues: Glutathione S-transferase Mu 7 (218 aa).

One can recognise a GST N-terminal domain in the interval 1 to 88 (MPMTLGYWDI…YLGRKHNLCG (88 aa)). Residues 7 to 8 (YW), 46 to 50 (WLNEK), 59 to 60 (NL), and 72 to 73 (QS) each bind glutathione. The GST C-terminal domain occupies 90–208 (TEEERIRVDI…KTSRFLPRPM (119 aa)). Tyrosine 116 is a binding site for substrate.

It belongs to the GST superfamily. Mu family. Homodimer.

It localises to the cytoplasm. The enzyme catalyses RX + glutathione = an S-substituted glutathione + a halide anion + H(+). In terms of biological role, conjugation of reduced glutathione to a wide number of exogenous and endogenous hydrophobic electrophiles. The sequence is that of Glutathione S-transferase Mu 7 (Gstm7) from Mus musculus (Mouse).